Consider the following 469-residue polypeptide: MSAVMTPAGFTDYKVADITLAAWGRRELIIAESEMPALMGLRRKYAGQQPLKGAKILGCIHMTIQTGVLIETLVALGAEVRWSSCNIFSTQDQAAAAIAAAGIPVFAWKGETEEEYEWCIEQTILKDGQPWDANMVLDDGGDLTEILHKKYPQMLERIHGITEETTTGVHRLLDMLKNGTLKVPAINVNDSVTKSKNDNKYGCRHSLNDAIKRGTDHLLSGKQALVIGYGDVGKGSSQSLRQEGMIVKVAEVDPICAMQACMDGFEVVSPYKNGINDGTEASIDAALLGKIDLIVTTTGNVNVCDANMLKALKKRAVVCNIGHFDNEIDTAFMRKNWAWEEVKPQVHKIHRTGKDGFDAYNDDYLILLAEGRLVNLGNATGHPSRIMDGSFANQVLAQIHLFEQKYADLPAAEKAKRLSVEVLPKKLDEEVALEMVKGFGGVVTQLTPKQAEYIGVSVEGPFKPDTYRY.

Substrate contacts are provided by Thr63, Asp139, and Glu164. Thr165–Thr167 serves as a coordination point for NAD(+). Positions 194 and 198 each coordinate substrate. Residues Asn199, Gly228–Gly233, Glu251, Asn300, Ile321–His323, and Asn375 contribute to the NAD(+) site.

Belongs to the adenosylhomocysteinase family. It depends on NAD(+) as a cofactor.

The protein resides in the cytoplasm. It carries out the reaction S-adenosyl-L-homocysteine + H2O = L-homocysteine + adenosine. Its pathway is amino-acid biosynthesis; L-homocysteine biosynthesis; L-homocysteine from S-adenosyl-L-homocysteine: step 1/1. May play a key role in the regulation of the intracellular concentration of adenosylhomocysteine. This Pseudomonas aeruginosa (strain UCBPP-PA14) protein is Adenosylhomocysteinase.